Reading from the N-terminus, the 297-residue chain is Ribosomal RNA small subunit methyltransferase H (297 aa).

Residues 30–32 (GGY), Asp48, Phe75, Asp96, and Gln103 contribute to the S-adenosyl-L-methionine site.

It belongs to the methyltransferase superfamily. RsmH family.

It is found in the cytoplasm. The enzyme catalyses cytidine(1402) in 16S rRNA + S-adenosyl-L-methionine = N(4)-methylcytidine(1402) in 16S rRNA + S-adenosyl-L-homocysteine + H(+). Specifically methylates the N4 position of cytidine in position 1402 (C1402) of 16S rRNA. This is Ribosomal RNA small subunit methyltransferase H from Ehrlichia chaffeensis (strain ATCC CRL-10679 / Arkansas).